The chain runs to 967 residues: Nonsense-mediated mRNA decay factor SMG8 (967 aa).

The segment at 627–702 is disordered; that stretch reads LNEGEDADAD…SCPESQSVAS (76 aa). Residues 628–639 show a composition bias toward acidic residues; sequence NEGEDADADADS. The segment covering 643–666 has biased composition (low complexity); sequence RSQICSSGQSSRSRSNSSSSDTSS. Residues 686–702 show a composition bias toward polar residues; the sequence is ATEALSESCPESQSVAS.

The protein belongs to the SMG8 family.

Involved in nonsense-mediated decay (NMD) of mRNAs containing premature stop codons. Probable component of kinase complex containing nonC and recruited to stalled ribosomes. This is Nonsense-mediated mRNA decay factor SMG8 from Drosophila mojavensis (Fruit fly).